A 514-amino-acid chain; its full sequence is 1-pyrroline-5-carboxylate dehydrogenase (514 aa).

Residues Glu286 and Cys320 contribute to the active site.

The protein belongs to the aldehyde dehydrogenase family. RocA subfamily.

It carries out the reaction L-glutamate 5-semialdehyde + NAD(+) + H2O = L-glutamate + NADH + 2 H(+). The protein operates within amino-acid degradation; L-proline degradation into L-glutamate; L-glutamate from L-proline: step 2/2. The sequence is that of 1-pyrroline-5-carboxylate dehydrogenase from Staphylococcus aureus (strain MW2).